We begin with the raw amino-acid sequence, 324 residues long: MTTRPHIAVIGAGAWGTALACATAATGADVTLWMRNPVPPRTRTLPRLPDITLPENVTITGDFPRTANVVLLVTPVQTARDVSTRLQTVLDPAVPVVTCCKGLEQATSLLPLDVLAETMPGRPTGVLSGPNFAIEVAKGLPAAATLACADLALAQKLTALLNTSSFRLYASDDAAGVQLAGAAKNVIAIGAGITIGAGLGENARAALITRAVAEIGRLAEATGGRASTLAGLAGMGDLILTCTGRGSRNYSVGLELGEGRPLADILASRTTVAEGVLTAPAMLALARKHNVRVPIIETVTRLLNDGVSIEEARHLLLDRPPTRE.

Residues Trp15, Arg35, and Lys101 each contribute to the NADPH site. Residues Lys101 and Gly129 each coordinate sn-glycerol 3-phosphate. Ala133 contacts NADPH. Lys184, Asp237, Ser247, Arg248, and Asn249 together coordinate sn-glycerol 3-phosphate. The active-site Proton acceptor is the Lys184. Arg248 is an NADPH binding site. NADPH is bound by residues Val272 and Glu274.

It belongs to the NAD-dependent glycerol-3-phosphate dehydrogenase family.

It is found in the cytoplasm. The enzyme catalyses sn-glycerol 3-phosphate + NAD(+) = dihydroxyacetone phosphate + NADH + H(+). It catalyses the reaction sn-glycerol 3-phosphate + NADP(+) = dihydroxyacetone phosphate + NADPH + H(+). The protein operates within membrane lipid metabolism; glycerophospholipid metabolism. Catalyzes the reduction of the glycolytic intermediate dihydroxyacetone phosphate (DHAP) to sn-glycerol 3-phosphate (G3P), the key precursor for phospholipid synthesis. The sequence is that of Glycerol-3-phosphate dehydrogenase [NAD(P)+] from Gluconobacter oxydans (strain 621H) (Gluconobacter suboxydans).